Here is a 248-residue protein sequence, read N- to C-terminus: Transmembrane protein 223 (248 aa).

3 helical membrane-spanning segments follow: residues 46 to 68, 84 to 104, and 140 to 160; these read IFRP…AAVA, LLAI…HFAF, and YGFT…ALLF.

This sequence belongs to the TMEM223 family.

It localises to the mitochondrion inner membrane. Mitochondrial ribosome-associated protein involved in the first steps of cytochrome c oxidase complex (complex IV) biogenesis. Stimulates the translation of MT-CO1 mRNA and is a constituent of early MT-CO1 assembly intermediates. This chain is Transmembrane protein 223, found in Danio rerio (Zebrafish).